An 88-amino-acid polypeptide reads, in one-letter code: Small ribosomal subunit protein uS15 (88 aa).

It belongs to the universal ribosomal protein uS15 family. In terms of assembly, part of the 30S ribosomal subunit. Forms a bridge to the 50S subunit in the 70S ribosome, contacting the 23S rRNA.

Functionally, one of the primary rRNA binding proteins, it binds directly to 16S rRNA where it helps nucleate assembly of the platform of the 30S subunit by binding and bridging several RNA helices of the 16S rRNA. Its function is as follows. Forms an intersubunit bridge (bridge B4) with the 23S rRNA of the 50S subunit in the ribosome. The protein is Small ribosomal subunit protein uS15 of Flavobacterium psychrophilum (strain ATCC 49511 / DSM 21280 / CIP 103535 / JIP02/86).